A 261-amino-acid polypeptide reads, in one-letter code: Cytochrome c oxidase subunit 3 (261 aa).

Residues 1-15 lie on the Mitochondrial matrix side of the membrane; it reads MAHQAHAYHMVDPSP. The chain crosses the membrane as a helical span at residues 16–34; the sequence is WPLTGAVAALLLTSGLAIW. Residues 35–40 are Mitochondrial intermembrane-facing; the sequence is FPFNSL. The chain crosses the membrane as a helical span at residues 41–66; sequence ILLTLGLVLLLLTMYQWWRDIVREGT. Over 67-72 the chain is Mitochondrial matrix; it reads FQGHHT. Residues 73-105 form a helical membrane-spanning segment; that stretch reads PPVQKGLRYGMILFITSEVFFFLGFFWAFYHSS. Topologically, residues 106-128 are mitochondrial intermembrane; it reads LAPTPELGGCWPPTGIVPLNPFE. A helical membrane pass occupies residues 129–152; it reads VPLLNTAVLLASGVTVTWAHHSIM. At 153-155 the chain is on the mitochondrial matrix side; that stretch reads EGE. Residues 156–183 traverse the membrane as a helical segment; the sequence is RKQAIHSLTLTILLGFYFTFLQAMEYYE. Residues 184 to 190 lie on the Mitochondrial intermembrane side of the membrane; sequence APFTIAD. The helical transmembrane segment at 191 to 223 threads the bilayer; that stretch reads GVYGSTFFVATGFHGLHVIIGSTFLAICLLRQI. Over 224–232 the chain is Mitochondrial matrix; that stretch reads RYHFTSEHH. The chain crosses the membrane as a helical span at residues 233–256; sequence FGFEAAAWYWHFVDVVWLFLYISI. At 257–261 the chain is on the mitochondrial intermembrane side; it reads YWWGS.

The protein belongs to the cytochrome c oxidase subunit 3 family. In terms of assembly, component of the cytochrome c oxidase (complex IV, CIV), a multisubunit enzyme composed of 14 subunits. The complex is composed of a catalytic core of 3 subunits MT-CO1, MT-CO2 and MT-CO3, encoded in the mitochondrial DNA, and 11 supernumerary subunits COX4I, COX5A, COX5B, COX6A, COX6B, COX6C, COX7A, COX7B, COX7C, COX8 and NDUFA4, which are encoded in the nuclear genome. The complex exists as a monomer or a dimer and forms supercomplexes (SCs) in the inner mitochondrial membrane with NADH-ubiquinone oxidoreductase (complex I, CI) and ubiquinol-cytochrome c oxidoreductase (cytochrome b-c1 complex, complex III, CIII), resulting in different assemblies (supercomplex SCI(1)III(2)IV(1) and megacomplex MCI(2)III(2)IV(2)).

The protein localises to the mitochondrion inner membrane. It catalyses the reaction 4 Fe(II)-[cytochrome c] + O2 + 8 H(+)(in) = 4 Fe(III)-[cytochrome c] + 2 H2O + 4 H(+)(out). In terms of biological role, component of the cytochrome c oxidase, the last enzyme in the mitochondrial electron transport chain which drives oxidative phosphorylation. The respiratory chain contains 3 multisubunit complexes succinate dehydrogenase (complex II, CII), ubiquinol-cytochrome c oxidoreductase (cytochrome b-c1 complex, complex III, CIII) and cytochrome c oxidase (complex IV, CIV), that cooperate to transfer electrons derived from NADH and succinate to molecular oxygen, creating an electrochemical gradient over the inner membrane that drives transmembrane transport and the ATP synthase. Cytochrome c oxidase is the component of the respiratory chain that catalyzes the reduction of oxygen to water. Electrons originating from reduced cytochrome c in the intermembrane space (IMS) are transferred via the dinuclear copper A center (CU(A)) of subunit 2 and heme A of subunit 1 to the active site in subunit 1, a binuclear center (BNC) formed by heme A3 and copper B (CU(B)). The BNC reduces molecular oxygen to 2 water molecules using 4 electrons from cytochrome c in the IMS and 4 protons from the mitochondrial matrix. The sequence is that of Cytochrome c oxidase subunit 3 (mt-co3) from Tetraodon nigroviridis (Spotted green pufferfish).